The chain runs to 487 residues: Zinc finger protein 345 (487 aa).

15 C2H2-type zinc fingers span residues Leu62–His84, Tyr90–His112, Tyr118–His140, Tyr146–His168, Tyr174–His196, Tyr202–His224, Tyr230–His252, Tyr258–His280, Tyr286–His308, Tyr314–His336, Tyr342–His364, Tyr370–His392, Tyr398–His420, Tyr426–His448, and Tyr454–His476.

Belongs to the krueppel C2H2-type zinc-finger protein family.

Its subcellular location is the nucleus. Functionally, may be involved in transcriptional regulation. This Bos taurus (Bovine) protein is Zinc finger protein 345 (ZNF345).